The chain runs to 327 residues: Chlorophenol reductase (327 aa).

Residues 1 to 24 form the signal peptide; that stretch reads MKKTLGIILSISLAFSVLALPIFA. The LysM domain occupies 65–110; the sequence is TYYTVVSGDFFWQIAAKHGLTIDALAKLNPQIKNVNLIFPGQKILV.

Requires cob(I)alamin as cofactor.

It is found in the secreted. It localises to the cell wall. The protein resides in the cell membrane. Inhibited by sulfide and to a lesser extent by nitrite. Functionally, reductive dechlorination of ortho-chlorophenols. Dechlorinates in the ortho position with respect to the hydroxyl group. This is Chlorophenol reductase from Desulfitobacterium hafniense (Desulfitobacterium frappieri).